The sequence spans 266 residues: MTNILSAIILGIIQGITEFLPISSSGHLLLFRHFINLKLSIIFDIYLHLATVLVIIIYYRKRILELFLTFIRFSLRKTVKSDLTNLKLILLILIITIVTGVVGTFISKYESMFTLSFVLINFIITGILILMLEFNFLKVDFKGNILLAGIFMGLMQGLGALPGISRSGITIFSASVIGFNRKSAFEISFLSLIPIVFGAILLKHKEFYDIFMVLNFFEINLGALVAFVVGIFSINFFFKMLNNKKLYYFSIYLFALSIIVCYFVRI.

The next 8 membrane-spanning stretches (helical) occupy residues 4 to 24 (ILSA…PISS), 39 to 59 (LSII…IIYY), 86 to 106 (LKLI…GTFI), 112 to 132 (MFTL…ILML), 145 to 165 (ILLA…PGIS), 182 to 202 (KSAF…AILL), 210 to 230 (IFMV…FVVG), and 246 to 266 (LYYF…FVRI).

This sequence belongs to the UppP family.

The protein resides in the cell inner membrane. The catalysed reaction is di-trans,octa-cis-undecaprenyl diphosphate + H2O = di-trans,octa-cis-undecaprenyl phosphate + phosphate + H(+). Functionally, catalyzes the dephosphorylation of undecaprenyl diphosphate (UPP). Confers resistance to bacitracin. The protein is Undecaprenyl-diphosphatase of Borreliella burgdorferi (strain ATCC 35210 / DSM 4680 / CIP 102532 / B31) (Borrelia burgdorferi).